The following is a 662-amino-acid chain: Methionine--tRNA ligase (662 aa).

The short motif at tyrosine 14 to serine 24 is the 'HIGH' region element. Positions lysine 308–serine 312 match the 'KMSKS' region motif. Lysine 311 provides a ligand contact to ATP. The region spanning aspartate 559–glycine 662 is the tRNA-binding domain.

This sequence belongs to the class-I aminoacyl-tRNA synthetase family. MetG type 2B subfamily. Homodimer.

The protein localises to the cytoplasm. It carries out the reaction tRNA(Met) + L-methionine + ATP = L-methionyl-tRNA(Met) + AMP + diphosphate. Is required not only for elongation of protein synthesis but also for the initiation of all mRNA translation through initiator tRNA(fMet) aminoacylation. This Lactococcus lactis subsp. lactis (strain IL1403) (Streptococcus lactis) protein is Methionine--tRNA ligase (metG).